A 196-amino-acid chain; its full sequence is Beta-crystallin A2 (196 aa).

The tract at residues 1–11 is N-terminal arm; the sequence is MTSEAMDTLGQ. Beta/gamma crystallin 'Greek key' domains follow at residues 12 to 51 and 52 to 98; these read YKITVWEEESFQGKRCEFLMECPSIMERGFRKIRSIKVES and GPWV…RPVK. Residues 99-104 are connecting peptide; the sequence is CANHND. Beta/gamma crystallin 'Greek key' domains are found at residues 105 to 146 and 147 to 195; these read SKAI…KVNA and GAWV…RRIQ.

The protein belongs to the beta/gamma-crystallin family. As to quaternary structure, homo/heterodimer, or complexes of higher-order. The structure of beta-crystallin oligomers seems to be stabilized through interactions between the N-terminal arms.

Its function is as follows. Crystallins are the dominant structural components of the vertebrate eye lens. The sequence is that of Beta-crystallin A2 (CRYBA2) from Gallus gallus (Chicken).